The primary structure comprises 398 residues: Dual-specificity RNA methyltransferase RlmN (398 aa).

E119 (proton acceptor) is an active-site residue. In terms of domain architecture, Radical SAM core spans 125-364 (EEERATLCVS…TIVRKTRGDD (240 aa)). C132 and C369 are joined by a disulfide. 3 residues coordinate [4Fe-4S] cluster: C139, C143, and C146. S-adenosyl-L-methionine is bound by residues 193–194 (GE), S225, 247–249 (SLH), and N326. Residue C369 is the S-methylcysteine intermediate of the active site.

It belongs to the radical SAM superfamily. RlmN family. [4Fe-4S] cluster is required as a cofactor.

It localises to the cytoplasm. The catalysed reaction is adenosine(2503) in 23S rRNA + 2 reduced [2Fe-2S]-[ferredoxin] + 2 S-adenosyl-L-methionine = 2-methyladenosine(2503) in 23S rRNA + 5'-deoxyadenosine + L-methionine + 2 oxidized [2Fe-2S]-[ferredoxin] + S-adenosyl-L-homocysteine. It carries out the reaction adenosine(37) in tRNA + 2 reduced [2Fe-2S]-[ferredoxin] + 2 S-adenosyl-L-methionine = 2-methyladenosine(37) in tRNA + 5'-deoxyadenosine + L-methionine + 2 oxidized [2Fe-2S]-[ferredoxin] + S-adenosyl-L-homocysteine. In terms of biological role, specifically methylates position 2 of adenine 2503 in 23S rRNA and position 2 of adenine 37 in tRNAs. m2A2503 modification seems to play a crucial role in the proofreading step occurring at the peptidyl transferase center and thus would serve to optimize ribosomal fidelity. The sequence is that of Dual-specificity RNA methyltransferase RlmN from Pectobacterium atrosepticum (strain SCRI 1043 / ATCC BAA-672) (Erwinia carotovora subsp. atroseptica).